A 433-amino-acid chain; its full sequence is Adenylosuccinate synthetase (433 aa).

GTP is bound by residues G13–K19 and G41–T43. D14 functions as the Proton acceptor in the catalytic mechanism. The Mg(2+) site is built by D14 and G41. IMP-binding positions include D14–K17, N39–H42, T130, R144, Q225, T240, and R304. H42 acts as the Proton donor in catalysis. S300 to R306 lines the substrate pocket. GTP-binding positions include R306, K332–D334, and S414–G416.

The protein belongs to the adenylosuccinate synthetase family. As to quaternary structure, homodimer. Requires Mg(2+) as cofactor.

The protein resides in the cytoplasm. The catalysed reaction is IMP + L-aspartate + GTP = N(6)-(1,2-dicarboxyethyl)-AMP + GDP + phosphate + 2 H(+). Its pathway is purine metabolism; AMP biosynthesis via de novo pathway; AMP from IMP: step 1/2. Its function is as follows. Plays an important role in the de novo pathway of purine nucleotide biosynthesis. Catalyzes the first committed step in the biosynthesis of AMP from IMP. The polypeptide is Adenylosuccinate synthetase (Buchnera aphidicola subsp. Acyrthosiphon pisum (strain APS) (Acyrthosiphon pisum symbiotic bacterium)).